A 435-amino-acid polypeptide reads, in one-letter code: Beta-arrestin arr-1 (435 aa).

The interval 358–382 is disordered; it reads LTHSKPPESPERTDRGLPSIEATNG. Residues 362–372 show a composition bias toward basic and acidic residues; sequence KPPESPERTDR. The Clathrin box motif lies at 390–394; it reads LIQLH. The short motif at 404 to 414 is the [DE]-X(1,2)-F-X-X-[FL]-X-X-X-R motif element; the sequence is DLIFEDFARMR. A disordered region spans residues 416–435; that stretch reads HGNDSEDQPSPSANLPPSLL. Positions 424–435 are enriched in low complexity; sequence PSPSANLPPSLL.

Belongs to the arrestin family. In terms of assembly, component of a complex composed of arr-1, daf-18 and mpz-1. Within the complex, interacts (via C-terminus) with mpz-1 (via PDZ domain) and phosphatase daf-18. May interact (via C-terminus) with clathrin chc-1 and beta-2 adaptin (AP2) apb-1. Expressed in head neurons, nerve ring and ventral nerve cord (at protein level). Expressed in the nervous system including the nerve ring and the ventral and dorsal nerve cords. Highly expressed in amphid chemosensory neurons AWA, AWB, AWC, ADL and ASH, and in hermaphrodite specific neuron HSN. Also expressed in the intestine.

The protein resides in the perikaryon. The protein localises to the cell projection. Its subcellular location is the dendrite. Its function is as follows. Adapter protein required for olfactory adaptation and recovery to volatile odorants, probably by desensitization of G-protein coupled receptors (GPCR). May play a role in clathrin-mediated GPCR endocytosis. Acts as a positive regulator of insulin-like daf-2 signaling pathway probably by forming a complex with mpz-1 and phosphatase daf-18 likely resulting in daf-18 inhibition. Involved in egg-laying. The polypeptide is Beta-arrestin arr-1 (Caenorhabditis elegans).